The primary structure comprises 432 residues: Selenocysteine lyase (432 aa).

Methionine 1 carries the post-translational modification N-acetylmethionine. The disordered stretch occupies residues 1–20; sequence MDVARNGARGSVESPPNRKV. Phosphoserine is present on serine 117. Lysine 247 carries the N6-(pyridoxal phosphate)lysine modification. Cysteine 375 serves as the catalytic S-selanylcysteine intermediate.

It belongs to the class-V pyridoxal-phosphate-dependent aminotransferase family. As to quaternary structure, homodimer. It depends on pyridoxal 5'-phosphate as a cofactor.

It localises to the cytoplasm. It is found in the cytosol. The catalysed reaction is L-selenocysteine + AH2 = hydrogenselenide + L-alanine + A + H(+). In terms of biological role, catalyzes the decomposition of L-selenocysteine to L-alanine and elemental selenium. The sequence is that of Selenocysteine lyase (Scly) from Rattus norvegicus (Rat).